Reading from the N-terminus, the 792-residue chain is Pentatricopeptide repeat-containing protein At4g30700 (792 aa).

16 PPR repeats span residues 51 to 81, 82 to 117, 118 to 152, 153 to 183, 184 to 218, 220 to 254, 255 to 285, 286 to 320, 321 to 352, 353 to 383, 384 to 418, 419 to 453, 454 to 484, 485 to 519, 520 to 555, and 556 to 586; these read DISLLTKLTQRLSDLGAIYYARDIFLSVQRP, DVFLFNVLMRGFSVNESPHSSLSVFAHLRKSTDLKP, NSSTYAFAISAASGFRDDRAGRVIHGQAVVDGCDS, ELLLGSNIVKMYFKFWRVEDARKVFDRMPEK, DTILWNTMISGYRKNEMYVESIQVFRDLINESCTR, DTTTLLDILPAVAELQELRLGMQIHSLATKTGCYS, HDYVLTGFISLYSKCGKIKMGSALFREFRKP, DIVAYNAMIHGYTSNGETELSLSLFKELMLSGARL, RSSTLVSLVPVSGHLMLIYAIHGYCLKSNFLS, HASVSTALTTVYSKLNEIESARKLFDESPEK, SLPSWNAMISGYTQNGLTEDAISLFREMQKSEFSP, NPVTITCILSACAQLGALSLGKWVHDLVRSTDFES, SIYVSTALIGMYAKCGSIAEARRLFDLMTKK, NEVTWNTMISGYGLHGQGQEALNIFYEMLNSGITP, TPVTFLCVLYACSHAGLVKEGDEIFNSMIHRYGFEP, and SVKHYACMVDILGRAGHLQRALQFIEAMSIE. Residues 591–666 are type E motif; sequence VWETLLGACR…APGYTLIEIG (76 aa). A type E(+) motif region spans residues 667 to 697; it reads ETPHVFTSGDQSHPQVKEIYEKLEKLEGKMR. The interval 698-792 is type DYW motif; the sequence is EAGYQPETEL…DGVCSCGDYW (95 aa).

It belongs to the PPR family. PCMP-H subfamily.

The polypeptide is Pentatricopeptide repeat-containing protein At4g30700 (DYW9) (Arabidopsis thaliana (Mouse-ear cress)).